The primary structure comprises 405 residues: Acetate kinase (405 aa).

Asn13 lines the Mg(2+) pocket. Lys20 serves as a coordination point for ATP. A substrate-binding site is contributed by Arg94. Asp153 (proton donor/acceptor) is an active-site residue. ATP contacts are provided by residues 213 to 217, 288 to 290, and 336 to 340; these read HLGNG, DFR, and GIGEN. Residue Glu390 participates in Mg(2+) binding.

It belongs to the acetokinase family. Homodimer. Mg(2+) is required as a cofactor. Mn(2+) serves as cofactor.

The protein resides in the cytoplasm. The enzyme catalyses acetate + ATP = acetyl phosphate + ADP. It participates in metabolic intermediate biosynthesis; acetyl-CoA biosynthesis; acetyl-CoA from acetate: step 1/2. Its function is as follows. Catalyzes the formation of acetyl phosphate from acetate and ATP. Can also catalyze the reverse reaction. In Buchnera aphidicola subsp. Acyrthosiphon pisum (strain APS) (Acyrthosiphon pisum symbiotic bacterium), this protein is Acetate kinase.